The sequence spans 938 residues: Isoleucine--tRNA ligase (938 aa).

The short motif at 58–68 (PYANGSIHIGH) is the 'HIGH' region element. Residue Lys183 is modified to N6-acetyllysine. Glu561 provides a ligand contact to L-isoleucyl-5'-AMP. The short motif at 602 to 606 (KMSKS) is the 'KMSKS' region element. Lys605 contacts ATP. The Zn(2+) site is built by Cys901, Cys904, Cys921, and Cys924.

The protein belongs to the class-I aminoacyl-tRNA synthetase family. IleS type 1 subfamily. In terms of assembly, monomer. It depends on Zn(2+) as a cofactor.

The protein localises to the cytoplasm. The catalysed reaction is tRNA(Ile) + L-isoleucine + ATP = L-isoleucyl-tRNA(Ile) + AMP + diphosphate. Catalyzes the attachment of isoleucine to tRNA(Ile). As IleRS can inadvertently accommodate and process structurally similar amino acids such as valine, to avoid such errors it has two additional distinct tRNA(Ile)-dependent editing activities. One activity is designated as 'pretransfer' editing and involves the hydrolysis of activated Val-AMP. The other activity is designated 'posttransfer' editing and involves deacylation of mischarged Val-tRNA(Ile). In Escherichia coli (strain 55989 / EAEC), this protein is Isoleucine--tRNA ligase.